A 151-amino-acid chain; its full sequence is 3-hydroxyacyl-[acyl-carrier-protein] dehydratase FabZ (151 aa).

Residue H49 is part of the active site.

It belongs to the thioester dehydratase family. FabZ subfamily.

It is found in the cytoplasm. It carries out the reaction a (3R)-hydroxyacyl-[ACP] = a (2E)-enoyl-[ACP] + H2O. In terms of biological role, involved in unsaturated fatty acids biosynthesis. Catalyzes the dehydration of short chain beta-hydroxyacyl-ACPs and long chain saturated and unsaturated beta-hydroxyacyl-ACPs. This chain is 3-hydroxyacyl-[acyl-carrier-protein] dehydratase FabZ, found in Bordetella parapertussis (strain 12822 / ATCC BAA-587 / NCTC 13253).